A 1080-amino-acid polypeptide reads, in one-letter code: DNA-directed RNA polymerase subunit beta C-terminal section (1080 aa).

The protein belongs to the RNA polymerase beta chain family. As to quaternary structure, in plastids the minimal PEP RNA polymerase catalytic core is composed of four subunits: alpha, beta, beta', and beta''. When a (nuclear-encoded) sigma factor is associated with the core the holoenzyme is formed, which can initiate transcription.

Its subcellular location is the plastid. It is found in the chloroplast. The catalysed reaction is RNA(n) + a ribonucleoside 5'-triphosphate = RNA(n+1) + diphosphate. Functionally, DNA-dependent RNA polymerase catalyzes the transcription of DNA into RNA using the four ribonucleoside triphosphates as substrates. This Stigeoclonium helveticum (Green alga) protein is DNA-directed RNA polymerase subunit beta C-terminal section (rpoB2).